The sequence spans 109 residues: Large ribosomal subunit protein uL22 (109 aa).

The protein belongs to the universal ribosomal protein uL22 family. As to quaternary structure, part of the 50S ribosomal subunit.

This protein binds specifically to 23S rRNA; its binding is stimulated by other ribosomal proteins, e.g. L4, L17, and L20. It is important during the early stages of 50S assembly. It makes multiple contacts with different domains of the 23S rRNA in the assembled 50S subunit and ribosome. Its function is as follows. The globular domain of the protein is located near the polypeptide exit tunnel on the outside of the subunit, while an extended beta-hairpin is found that lines the wall of the exit tunnel in the center of the 70S ribosome. The chain is Large ribosomal subunit protein uL22 from Leptothrix cholodnii (strain ATCC 51168 / LMG 8142 / SP-6) (Leptothrix discophora (strain SP-6)).